We begin with the raw amino-acid sequence, 174 residues long: I-Kappa-B like protein C1 (174 aa).

ANK repeat units follow at residues 56-88 and 93-123; these read RGRQ…DINA and TGNS…NLGA.

This sequence belongs to the polydnaviridae I-Kappa-B-like protein family.

In terms of biological role, suppresses the host immune response through NF-kappa-B inactivation. Possesses ankyrin repeat domains required for NF-kappa-B binding but lacks the regulatory regions required for dissociation from NF-kappa-B and degradation. Therefore, prevents host NF-kappa-B release and subsequent activation. The chain is I-Kappa-B like protein C1 (C1) from Microplitis demolitor bracovirus (isolate Webb) (MdBV).